We begin with the raw amino-acid sequence, 224 residues long: MSSHPPIRSYVLRQGYFSNAQRHAYESLLPRYGIPLTEEPVDLDSIFGRTAPGILEIGSGMGETTAEIARQHPEKDFIAIEVHAPGIGSLLGQIEKHRLTNLRIIPHDAKLVLQQMFTSESLDGIHIFFPDPWPKARHHKRRLIQPDFVSLLCDRLKPGGYLHIATDWEDYATHILHVLRSEERFVNTAVDYAARPAYRPLTKFEQRGMKLGHTIRDIIFTRTA.

The S-adenosyl-L-methionine site is built by glutamate 56, glutamate 81, aspartate 108, and aspartate 131. Residue aspartate 131 is part of the active site. Residues lysine 135, aspartate 167, and 202-205 contribute to the substrate site; that span reads TKFE.

The protein belongs to the class I-like SAM-binding methyltransferase superfamily. TrmB family.

The enzyme catalyses guanosine(46) in tRNA + S-adenosyl-L-methionine = N(7)-methylguanosine(46) in tRNA + S-adenosyl-L-homocysteine. Its pathway is tRNA modification; N(7)-methylguanine-tRNA biosynthesis. Catalyzes the formation of N(7)-methylguanine at position 46 (m7G46) in tRNA. The polypeptide is tRNA (guanine-N(7)-)-methyltransferase (Nitrosomonas europaea (strain ATCC 19718 / CIP 103999 / KCTC 2705 / NBRC 14298)).